A 361-amino-acid chain; its full sequence is Collagenase (361 aa).

The protein belongs to the peptidase U32 family. As to quaternary structure, homodimer. A metal cation is required as a cofactor.

Activity somewhat enhanced by calcium ions, inhibited by zinc and Fe(3+) ions and by p-chloromercuribenzoic acid and EDTA. Activity is enhanced by salivary peptide cystatin and reduced by salivary peptide histatin. Its function is as follows. Has collagenase activity. Active on soluble collagen, reconstituted type I collagen, heat denatured type I collagen and azocoll, but not gelatin or the synthetic bacterial collagenase substrate PZ-PLGPA. May play a role in virulence. The chain is Collagenase from Porphyromonas gingivalis (Bacteroides gingivalis).